A 338-amino-acid chain; its full sequence is NADPH dehydrogenase (338 aa).

An FMN-binding site is contributed by 23–26 (SPMC). Tyrosine 28 is a substrate binding site. FMN contacts are provided by alanine 60 and glutamine 102. 163-166 (HGAH) contacts substrate. Residues arginine 214 and 306-307 (AR) each bind FMN.

The protein belongs to the NADH:flavin oxidoreductase/NADH oxidase family. NamA subfamily. In terms of assembly, homotetramer. FMN is required as a cofactor.

It carries out the reaction A + NADPH + H(+) = AH2 + NADP(+). Catalyzes the reduction of the double bond of an array of alpha,beta-unsaturated aldehydes and ketones. It also reduces the nitro group of nitroester and nitroaromatic compounds. It could have a role in detoxification processes. This Halalkalibacterium halodurans (strain ATCC BAA-125 / DSM 18197 / FERM 7344 / JCM 9153 / C-125) (Bacillus halodurans) protein is NADPH dehydrogenase.